A 99-amino-acid chain; its full sequence is Putative membrane protein insertion efficiency factor (99 aa).

Belongs to the UPF0161 family.

It localises to the cell membrane. Could be involved in insertion of integral membrane proteins into the membrane. This is Putative membrane protein insertion efficiency factor from Corynebacterium efficiens (strain DSM 44549 / YS-314 / AJ 12310 / JCM 11189 / NBRC 100395).